Consider the following 1169-residue polypeptide: Rabankyrin-5 (1169 aa).

Alanine 2 is subject to N-acetylalanine. The BTB domain maps to serine 68–glutamate 130. ANK repeat units follow at residues lysine 217 to glycine 247, asparagine 255 to methionine 284, serine 288 to alanine 317, alanine 322 to methionine 362, and lysine 366 to leucine 396. Residue serine 270 is modified to Phosphoserine. Residues asparagine 421–phenylalanine 423 carry the NPF motif. ANK repeat units follow at residues tryptophan 490–leucine 519, histidine 542–alanine 572, arginine 588–aspartate 617, aspartate 621–valine 650, aspartate 654–valine 683, lysine 687–cysteine 716, cysteine 724–serine 753, aspartate 769–alanine 798, glutamate 802–valine 832, glutamine 836–glutamate 865, lysine 870–serine 899, serine 905–glutamate 934, histidine 938–alanine 967, asparagine 971–alanine 1001, arginine 1005–leucine 1037, and aspartate 1043–valine 1072. The interaction with RHOD and RAB5A stretch occupies residues valine 650–alanine 759. Residues tryptophan 1104–threonine 1164 form an FYVE-type zinc finger. Zn(2+) contacts are provided by cysteine 1110, cysteine 1113, cysteine 1126, cysteine 1129, cysteine 1134, cysteine 1137, cysteine 1156, and cysteine 1159.

In terms of assembly, interacts with RAB5A (in GTP-bound form). Interacts with RHOD (independent of GTP-loaded status). Interacts with EHD1. Interacts with VPS26A; the interaction is independent of EHD1 and is indicative for an association with the cargo recognition subcomplex of the retromer complex. High expression in whole adult brain and intermediate expression in all other tissues and specific brain regions examined, including fetal brain.

It localises to the cytoplasm. Its subcellular location is the endosome membrane. The protein resides in the early endosome. Its function is as follows. Proposed effector of Rab5. Binds to phosphatidylinositol 3-phosphate (PI(3)P). Involved in homotypic early endosome fusion and to a lesser extent in heterotypic fusion of chlathrin-coated vesicles with early endosomes. Involved in macropinocytosis; the function is dependent on Rab5-GTP. Required for correct endosomal localization. Involved in the internalization and trafficking of activated tyrosine kinase receptors such as PDGFRB. Regulates the subcellular localization of the retromer complex in a EHD1-dependent manner. Involved in endosome-to-Golgi transport and biosynthetic transport to late endosomes and lysosomes indicative for a regulation of retromer complex-mediated retrograde transport. The chain is Rabankyrin-5 (ANKFY1) from Homo sapiens (Human).